The following is a 302-amino-acid chain: L-aminoadipate-semialdehyde dehydrogenase-phosphopantetheinyl transferase (302 aa).

Residues Arg-44, Arg-83 to Lys-88, and Asn-105 to His-108 contribute to the CoA site. Residues Asp-126 and Glu-178 each coordinate Mg(2+). Glu-178–Lys-182 contacts CoA.

This sequence belongs to the P-Pant transferase superfamily. AcpS family. As to quaternary structure, monomer. The cofactor is Mg(2+).

It localises to the cytoplasm. The protein localises to the cytosol. The catalysed reaction is apo-[ACP] + CoA = holo-[ACP] + adenosine 3',5'-bisphosphate + H(+). It catalyses the reaction apo-[ACP] + acetyl-CoA = acetyl-[ACP] + adenosine 3',5'-bisphosphate + H(+). Its function is as follows. Catalyzes the post-translational modification of target proteins by phosphopantetheine. Can transfer the 4'-phosphopantetheine moiety from coenzyme A, regardless of whether the CoA is presented in the free thiol form or as an acetyl thioester, to a serine residue of a broad range of acceptors. The sequence is that of L-aminoadipate-semialdehyde dehydrogenase-phosphopantetheinyl transferase (aasdhppt) from Xenopus laevis (African clawed frog).